Here is a 134-residue protein sequence, read N- to C-terminus: MARVTVEDCIDKVENRFELVLLASHRARLISQGSSITIDRDNDKNPVVALREIADETLSPDDLKEDLIHSLQKHVEIDEPEPDPASLLAAGGNASASGDEEEDAPEAVTFDQMSEEELLAGIEGLVPPEKSDDY.

The interval 77-108 (IDEPEPDPASLLAAGGNASASGDEEEDAPEAV) is disordered. A compositionally biased stretch (low complexity) spans 85 to 97 (ASLLAAGGNASAS).

The protein belongs to the RNA polymerase subunit omega family. As to quaternary structure, the RNAP catalytic core consists of 2 alpha, 1 beta, 1 beta' and 1 omega subunit. When a sigma factor is associated with the core the holoenzyme is formed, which can initiate transcription.

The enzyme catalyses RNA(n) + a ribonucleoside 5'-triphosphate = RNA(n+1) + diphosphate. Functionally, promotes RNA polymerase assembly. Latches the N- and C-terminal regions of the beta' subunit thereby facilitating its interaction with the beta and alpha subunits. This is DNA-directed RNA polymerase subunit omega from Rhizobium rhizogenes (strain K84 / ATCC BAA-868) (Agrobacterium radiobacter).